The chain runs to 70 residues: Eglin C (70 aa).

The protein belongs to the protease inhibitor I13 (potato type I serine protease inhibitor) family.

Inhibits both elastase and cathepsin G. This chain is Eglin C, found in Hirudo medicinalis (Medicinal leech).